The following is a 650-amino-acid chain: p-hydroxybenzoic acid efflux pump subunit AaeB (650 aa).

Transmembrane regions (helical) follow at residues 7-27 (FPIK…HLNL), 32-52 (WAVM…GGDP), 61-81 (GILR…IMIA), 87-107 (VVML…SSLI), 115-135 (LGLA…SGGL), 148-168 (EIIL…PRSI), 365-385 (LFWL…LGVI), 402-422 (FVYG…YILP), 426-446 (QSAV…GILI), 450-470 (QIGT…DNPM), and 478-498 (IDNA…ILLI).

Belongs to the aromatic acid exporter ArAE (TC 2.A.85) family.

It is found in the cell inner membrane. In terms of biological role, forms an efflux pump with AaeA. Could function as a metabolic relief valve, allowing to eliminate certain compounds when they accumulate to high levels in the cell. The protein is p-hydroxybenzoic acid efflux pump subunit AaeB of Pantoea ananatis (strain LMG 20103).